The following is a 199-amino-acid chain: uncharacterized protein (199 aa).

3 helical membrane-spanning segments follow: residues Val22–Leu44, Thr65–Leu87, and His91–Trp108.

This sequence belongs to the ycf1 family.

Its subcellular location is the mitochondrion membrane. This is an uncharacterized protein from Arabidopsis thaliana (Mouse-ear cress).